A 403-amino-acid chain; its full sequence is Phosphopentomutase (403 aa).

The Mn(2+) site is built by aspartate 13, aspartate 298, histidine 303, aspartate 339, histidine 340, and histidine 351.

The protein belongs to the phosphopentomutase family. The cofactor is Mn(2+).

It is found in the cytoplasm. It catalyses the reaction 2-deoxy-alpha-D-ribose 1-phosphate = 2-deoxy-D-ribose 5-phosphate. The enzyme catalyses alpha-D-ribose 1-phosphate = D-ribose 5-phosphate. It functions in the pathway carbohydrate degradation; 2-deoxy-D-ribose 1-phosphate degradation; D-glyceraldehyde 3-phosphate and acetaldehyde from 2-deoxy-alpha-D-ribose 1-phosphate: step 1/2. In terms of biological role, isomerase that catalyzes the conversion of deoxy-ribose 1-phosphate (dRib-1-P) and ribose 1-phosphate (Rib-1-P) to deoxy-ribose 5-phosphate (dRib-5-P) and ribose 5-phosphate (Rib-5-P), respectively. The sequence is that of Phosphopentomutase from Streptococcus mutans serotype c (strain ATCC 700610 / UA159).